The sequence spans 20 residues: Styelin-A (20 aa).

As to expression, hemocytes and pharyngeal tissues.

The protein localises to the secreted. Bactericidal against several Gram-positive and Gram-negative bacteria. This is Styelin-A from Styela clava (Sea squirt).